The chain runs to 949 residues: Sensor histidine kinase RcsC (949 aa).

Residues 1–19 lie on the Cytoplasmic side of the membrane; it reads MKYLASFRTTLKASRYMFR. A helical transmembrane segment spans residues 20 to 41; the sequence is ALALVLWLLIAFSSVFYIVNAL. Topologically, residues 42–313 are periplasmic; sequence HQRESEIRQE…PVDKVLERIR (272 aa). A helical membrane pass occupies residues 314-335; the sequence is MVILNAILLNVLAGAALFTLAR. Topologically, residues 336–949 are cytoplasmic; it reads MYERRIFIPA…AERVRKSRES (614 aa). Residues 357-425 form the PAS domain; that stretch reads QFNRKIVASA…VLTSNNTNLQ (69 aa). The region spanning 476–692 is the Histidine kinase domain; the sequence is TVSHELRTPL…QFTVRIPLYG (217 aa). Residue His-479 is modified to Phosphohistidine; by autocatalysis. In terms of domain architecture, ABL spans 705-805; it reads SGKRCWLAVR…ARIYLIEMES (101 aa). A Response regulatory domain is found at 826–940; it reads MILVVDDHPI…VIKQTLTVYA (115 aa). At Asp-875 the chain carries 4-aspartylphosphate.

It belongs to the RcsC family. Interacts with RcsD. Autophosphorylated. Activation probably requires a transfer of a phosphate group from a His in the transmitter domain to an Asp in the receiver domain.

The protein resides in the cell inner membrane. The catalysed reaction is ATP + protein L-histidine = ADP + protein N-phospho-L-histidine.. Component of the Rcs signaling system, which controls transcription of numerous genes. RcsC functions as a membrane-associated protein kinase that phosphorylates RcsD in response to environmental signals. The phosphoryl group is then transferred to the response regulator RcsB. Involved in regulation of K30 capsular polysaccharide synthesis. The sequence is that of Sensor histidine kinase RcsC from Escherichia coli.